We begin with the raw amino-acid sequence, 119 residues long: Holo-[acyl-carrier-protein] synthase (119 aa).

2 residues coordinate Mg(2+): aspartate 8 and glutamate 58.

It belongs to the P-Pant transferase superfamily. AcpS family. Requires Mg(2+) as cofactor.

It is found in the cytoplasm. It catalyses the reaction apo-[ACP] + CoA = holo-[ACP] + adenosine 3',5'-bisphosphate + H(+). In terms of biological role, transfers the 4'-phosphopantetheine moiety from coenzyme A to a Ser of acyl-carrier-protein. This is Holo-[acyl-carrier-protein] synthase from Bacillus cytotoxicus (strain DSM 22905 / CIP 110041 / 391-98 / NVH 391-98).